The chain runs to 271 residues: Probable L,D-transpeptidase 3 (271 aa).

The L,D-TPase catalytic domain occupies 127-270 (VVGVASISQH…VDIGDPVIVQ (144 aa)). Histidine 228 acts as the Proton donor/acceptor in catalysis. Cysteine 246 serves as the catalytic Nucleophile.

It participates in cell wall biogenesis; peptidoglycan biosynthesis. With respect to regulation, is irreversibly inactivated by the beta-lactam carbapenems via the formation of a covalent adduct resulting from acylation of the catalytic Cys. Imipenem is the most efficient drug for in vitro LdtMt3/Rv1433 inactivation. Probable L,D-transpeptidase that may perform as-yet-unknown cross-linking reactions in M.tuberculosis. Is not able to generate 3-&gt;3 cross-links in peptidoglycan, using tetrapeptide stems as acyl donor substrates. May function in the anchoring of proteins to peptidoglycan. This Mycobacterium tuberculosis (strain ATCC 25618 / H37Rv) protein is Probable L,D-transpeptidase 3.